We begin with the raw amino-acid sequence, 156 residues long: Cell division protein SepF (156 aa).

Positions 23 to 36 (SYEKEQTDMKKQQD) are enriched in basic and acidic residues. Residues 23–48 (SYEKEQTDMKKQQDPPEQQDVTFPKA) form a disordered region. Residues 37 to 48 (PPEQQDVTFPKA) show a composition bias toward polar residues.

Belongs to the SepF family. As to quaternary structure, homodimer. Interacts with FtsZ.

It is found in the cytoplasm. In terms of biological role, cell division protein that is part of the divisome complex and is recruited early to the Z-ring. Probably stimulates Z-ring formation, perhaps through the cross-linking of FtsZ protofilaments. Its function overlaps with FtsA. The protein is Cell division protein SepF of Bacillus cereus (strain ATCC 10987 / NRS 248).